The following is a 642-amino-acid chain: Transcription factor 4 (642 aa).

Over residues 1–25 (MFSPPVSSGKNGPTSLASGHFTGSN) the composition is skewed to polar residues. The segment at 1 to 59 (MFSPPVSSGKNGPTSLASGHFTGSNVEDRSSSGSWGNGGHPSPSRNYGDGTPYDHMTSR) is essential for MYOD1 inhibition. Disordered stretches follow at residues 1–296 (MFSP…SQTG), 311–354 (HTNN…EGPL), 444–545 (PNQV…MANN), and 609–642 (KRRE…MGQM). Ser-42, Ser-63, and Ser-68 each carry phosphoserine. Polar residues-rich tracts occupy residues 83–98 (GSYS…QGCH), 112–130 (GTLS…SSNN), 181–191 (PAASTFPSSFF), 218–230 (GSSS…SSYC), and 241–281 (PSHS…TDSI). Low complexity predominate over residues 312–323 (TNNSFSSNPSTP). A compositionally biased stretch (polar residues) spans 340-349 (NGGQASSSPN). A Phosphoserine modification is found at Ser-347. Positions 354-375 (LHSLQSRIEDRLERLDDAIHVL) are leucine-zipper. Composition is skewed to low complexity over residues 444-455 (PNQVPVPQLPVQ) and 478-487 (GQSVSSGSSE). Residue Ser-490 is modified to Phosphoserine. 2 stretches are compositionally biased toward basic and acidic residues: residues 502–517 (KSSE…KDIK) and 530–545 (PEQK…MANN). The bHLH domain occupies 539–592 (ERRMANNARERLRVRDINEAFKELGRMVQLHLKSDKPQTKLLILHQAVAVILSL). The interval 594–617 (QQVRERNLNPKAACLKRREEEKVS) is class A specific domain.

Efficient DNA binding requires dimerization with another bHLH protein. Forms homo- or heterooligomers with myogenin. Interacts with HIVEP2. Interacts with NEUROD2. Interacts with AGBL1. In terms of tissue distribution, widely expressed.

It localises to the nucleus. In terms of biological role, transcription factor that binds to the immunoglobulin enhancer Mu-E5/KE5-motif. Involved in the initiation of neuronal differentiation. Activates transcription by binding to the E box (5'-CANNTG-3'). Binds to the thyroglobulin promoter. The chain is Transcription factor 4 (TCF4) from Canis lupus familiaris (Dog).